A 397-amino-acid chain; its full sequence is S-layer protein B (397 aa).

The N-terminal stretch at 1–24 is a signal peptide; the sequence is MVVKKTFVLSTLILISVVALVSTA. Positions 259–314 form a coiled coil; it reads INALNNEVSTLRSEISSLNSTIASLNKSLANANTQISNLQSEITTLNSEIGKLNST. The chain crosses the membrane as a helical span at residues 373 to 393; it reads GGIIAGIIGLIVAIVAIVLVM.

This sequence belongs to the Sulfolobales SlaB family. The mushroom-shaped unit cells of the Sulfolobales' S-layers may consist of three SlaB subunits and six SlaA subunits.

It is found in the secreted. It localises to the cell wall. Its subcellular location is the S-layer. The protein resides in the cell membrane. Functionally, S-layer small protein. May anchor the complex to the cell membrane. The sequence is that of S-layer protein B from Saccharolobus solfataricus (strain ATCC 35092 / DSM 1617 / JCM 11322 / P2) (Sulfolobus solfataricus).